The primary structure comprises 695 residues: Methionine synthase reductase (695 aa).

Positions 4–147 constitute a Flavodoxin-like domain; the sequence is FLLLYATQRG…VVEPWINGLW (144 aa). FMN-binding positions include 10–14 and 93–124; these read TQRGQ and LLGL…QRFY. The segment at 166–245 is hinge; sequence TLTMASHASR…ASLNIPSLPP (80 aa). 2 positions are modified to phosphoserine: Ser171 and Ser187. Residues 269–531 form the FAD-binding FR-type domain; sequence DPVFHVPVSK…PRTTNSFHLP (263 aa). Lys289 is an NADP(+) binding site. FAD is bound by residues 449 to 452 and 485 to 488; these read RPYS and GVCT. Residues 608 to 609, 622 to 624, and Asp657 each bind NADP(+); these read SR and YVQ. FAD is bound at residue Trp695.

Forms a multiprotein complex with MMACHC, MMADHC and MTR. FAD is required as a cofactor. The cofactor is FMN.

The protein localises to the cytoplasm. The enzyme catalyses 2 methylcob(III)alamin-[methionine synthase] + 2 S-adenosyl-L-homocysteine + NADP(+) + H(+) = 2 cob(II)alamin-[methionine synthase] + 2 S-adenosyl-L-methionine + NADPH. The catalysed reaction is 2 cob(II)alamin + A + 2 H2O + 2 H(+) = 2 aquacob(III)alamin + AH2. Its function is as follows. Key enzyme in methionine and folate homeostasis responsible for the reactivation of methionine synthase (MTR/MS) activity by catalyzing the reductive methylation of MTR-bound cob(II)alamin. Cobalamin (vitamin B12) forms a complex with MTR to serve as an intermediary in methyl transfer reactions that cycles between MTR-bound methylcob(III)alamin and MTR bound-cob(I)alamin forms, and occasional oxidative escape of the cob(I)alamin intermediate during the catalytic cycle leads to the inactive cob(II)alamin species. The processing of cobalamin in the cytosol occurs in a multiprotein complex composed of at least MMACHC, MMADHC, MTRR and MTR which may contribute to shuttle safely and efficiently cobalamin towards MTR in order to produce methionine. Also necessary for the utilization of methyl groups from the folate cycle, thereby affecting transgenerational epigenetic inheritance. Also acts as a molecular chaperone for methionine synthase by stabilizing apoMTR and incorporating methylcob(III)alamin into apoMTR to form the holoenzyme. Also serves as an aquacob(III)alamin reductase by reducing aquacob(III)alamin to cob(II)alamin; this reduction leads to stimulation of the conversion of apoMTR and aquacob(III)alamin to MTR holoenzyme. This is Methionine synthase reductase (MTRR) from Bos taurus (Bovine).